Here is a 216-residue protein sequence, read N- to C-terminus: Transmembrane emp24 domain-containing protein eca (216 aa).

The N-terminal stretch at 1-20 (MRNQFICVALLLCALNSACG) is a signal peptide. Residues 21 to 183 (LYFHISETER…RHTSESTNSR (163 aa)) are Lumenal-facing. Positions 30–126 (RKCFIEEVPD…QLRVHLDIQV (97 aa)) constitute a GOLD domain. Positions 134-164 (ANVAQKEKLTELQLRIRQLLDQVDQITKEQN) form a coiled coil. Residues 184 to 203 (VLWWSLAQTVVLVCMGFWQM) form a helical membrane-spanning segment. Over 204–216 (RHLKSFFEAKKLV) the chain is Cytoplasmic. The short motif at 213–216 (KKLV) is the Prevents secretion from ER element.

The protein belongs to the EMP24/GP25L family.

The protein localises to the endoplasmic reticulum membrane. Its function is as follows. Eca and bai are essential, though not redundant, for dorsoventral patterning of the embryo. Specifically required during early embryogenesis for the activity of maternal tkv, while the zygotic tkv is not affected. Involved in Golgi organization. This Drosophila willistoni (Fruit fly) protein is Transmembrane emp24 domain-containing protein eca.